An 823-amino-acid chain; its full sequence is Bifunctional enzyme flvA (823 aa).

Residues 56-535 (TAKFEMALMP…QRLYDAKFYI (480 aa)) are pyridoxal 5'-phosphate-dependent lyase. N6-(pyridoxal phosphate)lysine is present on K331. The tract at residues 573 to 823 (DFDALQQVSH…TLPMNVPLWL (251 aa)) is alpha-ketoglutarate-dependent oxygenase. Fe cation contacts are provided by H703 and D705.

The protein in the N-terminal section; belongs to the trans-sulfuration enzymes family. In the C-terminal section; belongs to the iron/ascorbate-dependent oxidoreductase family. Pyridoxal 5'-phosphate is required as a cofactor. The cofactor is Fe(2+).

The enzyme catalyses O-acetyl-L-homoserine + 3-methyl-2-oxobutanoate = (6S)-6-amino-3,3-dimethyl-2-oxoheptanedioate + acetate + H(+). The catalysed reaction is (6S)-3,3-dimethylpiperidine-2,6-dicarboxylate + 2-oxoglutarate + AH2 + O2 + H(+) = (2S)-5,5-dimethylpiperidine-2-carboxylate + succinate + A + 2 CO2 + H2O. The protein operates within secondary metabolite biosynthesis; terpenoid biosynthesis. In terms of biological role, bifunctional enzyme; part of the gene cluster that mediates the biosynthesis of flavunoidine, an alkaloidal terpenoid with a tetracyclic cage-like core connected to dimethylcadaverine via a C-N bond and acylated with 5,5-dimethyl-L-pipecolate. The tetracyclic core is synthesized by the terpene cyclase flvE and the cytochrome P450 monooxygenase flvD. The terpene cyclase flvE catalyzes the cyclization of farnesyl pyrophosphate (FPP) to form (1R,4R,5S)-(+)-acoradiene and the cytochrome P450 monooxygenase flvD is then responsible for oxidative conversion of (1R,4R,5S)-(+)-acoradiene into the tetracyclic cage present in the final product flavunoidine. In parallel, the N-methyltransferase flvH dimethylates L-lysine to give N,N-dimethyl-L-Lysin which is decarboxylated by flvG to afford dimethylcadaverine. The terpene cyclase-like protein flvF is the enzyme that attaches the dimethylcadaverine precusor at the C-7 of the tetracyclic cage to yield pre-flavunoidine. The cytochrome monooxygenase flvC hydroxylates the C-10 position of pre-flavunoidine whereas the NRPS flvI acylates the terpenoid core at the hydroxylated C-10 with dimethylpipecolate to yield final flavunoidine. The bifunctional enzyme flvA and the dehydrogenase flvB are responsible for the synthesis of the dimethylpipecolate precursor. The PLP-dependent lyase domain of flvA might use L-O-acetyl-homoserine and alpha-keto-isovalerate to form an intermediary ketone that can cyclize intramolecularly to yield an imine. The imine can be reduced by flvB to yield the 6-carboxylated pipecolate. The C-terminal alpha-KG-dependent oxygenase domain of flvA is then proposed to catalyze the decarboxylation to yield dimethylpipecolate. The polypeptide is Bifunctional enzyme flvA (Aspergillus flavus (strain ATCC 200026 / FGSC A1120 / IAM 13836 / NRRL 3357 / JCM 12722 / SRRC 167)).